A 1235-amino-acid polypeptide reads, in one-letter code: DNA polymerase (1235 aa).

The DOD-type homing endonuclease domain occupies 773–887 (LLGYYISSGD…LILLLNSIGV (115 aa)).

Belongs to the DNA polymerase type-B family. In terms of processing, this protein undergoes a protein self splicing that involves a post-translational excision of the intervening region (intein) followed by peptide ligation.

The catalysed reaction is DNA(n) + a 2'-deoxyribonucleoside 5'-triphosphate = DNA(n+1) + diphosphate. This chain is DNA polymerase (pol), found in Pyrococcus horikoshii (strain ATCC 700860 / DSM 12428 / JCM 9974 / NBRC 100139 / OT-3).